Reading from the N-terminus, the 233-residue chain is B-cell lymphoma/leukemia 10 (233 aa).

Met1 carries the post-translational modification N-acetylmethionine. The 89-residue stretch at Leu13–Asp101 folds into the CARD domain. Glycyl lysine isopeptide (Lys-Gly) (interchain with G-Cter in ubiquitin) cross-links involve residues Lys17, Lys31, and Lys63. Phosphoserine is present on Ser138. Positions Ser185–Gln233 are disordered. A compositionally biased stretch (pro residues) spans Pro195–Pro205.

In terms of assembly, homomultimer; homooligomerized following recruitment by CARD domain-containing proteins that form a nucleating helical template that recruits BCL10 via CARD-CARD interaction. Self-associates by CARD-CARD interaction and interacts with other CARD-proteins such as CARD9, CARD10, CARD11 and CARD14. Forms a complex with CARD14 and MALT1; resulting in the formation of a CBM (CARD14-BCL10-MALT1) complex. Forms a complex with CARD11 and MALT1; resulting in the formation of a CBM (CARD11-BCL10-MALT1) complex. Forms a complex with CARD9 and MALT1; resulting in the formation of a CBM (CARD9-BCL10-MALT1) complex. Found in a membrane raft complex, at least composed of BCL10, CARD11, DPP4 and IKBKB. Binds caspase-9 with its C-terminal domain. Interacts with TRAF2 and BIRC2/c-IAP2. Interacts with PELI2 and SOCS3; these interactions may be mutually exclusive. In terms of processing, phosphorylated by IKBKB/IKKB. Ubiquitinated via both 'Lys-63'-linked and linear ('Met-1'-linked) polyubiquitin chains in response to T-cell receptor (TCR) activation. Ubiquitination is recognized by IKBKG/NEMO, the regulatory subunit of I-kappa-B kinase (IKK), and is required for TCR-induced NF-kappa-B activation. Linear ubiquitination at Lys-17, Lys-31 and Lys-63 is mediated by RNF31/HOIP; linear ubiquitination is recognized with much higher affinity than 'Lys-63'-linked ubiquitin by IKBKG/NEMO. CARD11 is required for linear ubiquitination by HOIP by promoting the targeting of BCL10 to RNF31/HOIP. Post-translationally, proteolytically cleaved by MALT1; required for T-cell activation. In terms of tissue distribution, highly expressed in heart, brain, spleen, lung, liver, skeletal muscle, kidney and testis. Detected in developing brain, olfactory epithelium, tongue, whisker follicles, salivary gland, heart, lung, liver and intestinal epithelia of stage 15 embryos.

It localises to the cytoplasm. The protein localises to the membrane raft. Plays a key role in both adaptive and innate immune signaling by bridging CARD domain-containing proteins to immune activation. Acts by channeling adaptive and innate immune signaling downstream of CARD domain-containing proteins CARD9, CARD11 and CARD14 to activate NF-kappa-B and MAP kinase p38 (MAPK11, MAPK12, MAPK13 and/or MAPK14) pathways which stimulate expression of genes encoding pro-inflammatory cytokines and chemokines. Recruited by activated CARD domain-containing proteins: homooligomerized CARD domain-containing proteins form a nucleating helical template that recruits BCL10 via CARD-CARD interaction, thereby promoting polymerization of BCL10, subsequent recruitment of MALT1 and formation of a CBM complex. This leads to activation of NF-kappa-B and MAP kinase p38 (MAPK11, MAPK12, MAPK13 and/or MAPK14) pathways which stimulate expression of genes encoding pro-inflammatory cytokines and chemokines. Activated by CARD9 downstream of C-type lectin receptors; CARD9-mediated signals are essential for antifungal immunity. Activated by CARD11 downstream of T-cell receptor (TCR) and B-cell receptor (BCR). Promotes apoptosis, pro-caspase-9 maturation and activation of NF-kappa-B via NIK and IKK. This chain is B-cell lymphoma/leukemia 10 (Bcl10), found in Mus musculus (Mouse).